The primary structure comprises 118 residues: Holo-[acyl-carrier-protein] synthase (118 aa).

Asp5 and Glu50 together coordinate Mg(2+).

This sequence belongs to the P-Pant transferase superfamily. AcpS family. Mg(2+) serves as cofactor.

It localises to the cytoplasm. The enzyme catalyses apo-[ACP] + CoA = holo-[ACP] + adenosine 3',5'-bisphosphate + H(+). In terms of biological role, transfers the 4'-phosphopantetheine moiety from coenzyme A to a Ser of acyl-carrier-protein. This chain is Holo-[acyl-carrier-protein] synthase, found in Wolinella succinogenes (strain ATCC 29543 / DSM 1740 / CCUG 13145 / JCM 31913 / LMG 7466 / NCTC 11488 / FDC 602W) (Vibrio succinogenes).